A 32-amino-acid polypeptide reads, in one-letter code: Ranatuerin-2CSa (32 aa).

Cysteines 27 and 32 form a disulfide.

Expressed by the skin glands.

It is found in the secreted. It localises to the target cell membrane. Antibacterial peptide with amphipathic alpha-helical structure. Active against E.coli ATCC 25726 (MIC=4-5 uM) and S.aureus ATCC 25923 (MIC=8-10 uM). Has a weak hemolytic activity on human erythrocytes (LC(50)=150-160 uM). The protein is Ranatuerin-2CSa of Rana cascadae (Cascades frog).